The following is a 162-amino-acid chain: Probable chemoreceptor glutamine deamidase CheD (162 aa).

Belongs to the CheD family.

The catalysed reaction is L-glutaminyl-[protein] + H2O = L-glutamyl-[protein] + NH4(+). In terms of biological role, probably deamidates glutamine residues to glutamate on methyl-accepting chemotaxis receptors (MCPs), playing an important role in chemotaxis. In Clostridium botulinum (strain Eklund 17B / Type B), this protein is Probable chemoreceptor glutamine deamidase CheD.